Here is a 94-residue protein sequence, read N- to C-terminus: Pyrimidine/purine nucleoside phosphorylase (94 aa).

This sequence belongs to the nucleoside phosphorylase PpnP family.

The enzyme catalyses a purine D-ribonucleoside + phosphate = a purine nucleobase + alpha-D-ribose 1-phosphate. It catalyses the reaction adenosine + phosphate = alpha-D-ribose 1-phosphate + adenine. It carries out the reaction cytidine + phosphate = cytosine + alpha-D-ribose 1-phosphate. The catalysed reaction is guanosine + phosphate = alpha-D-ribose 1-phosphate + guanine. The enzyme catalyses inosine + phosphate = alpha-D-ribose 1-phosphate + hypoxanthine. It catalyses the reaction thymidine + phosphate = 2-deoxy-alpha-D-ribose 1-phosphate + thymine. It carries out the reaction uridine + phosphate = alpha-D-ribose 1-phosphate + uracil. The catalysed reaction is xanthosine + phosphate = alpha-D-ribose 1-phosphate + xanthine. Catalyzes the phosphorolysis of diverse nucleosides, yielding D-ribose 1-phosphate and the respective free bases. Can use uridine, adenosine, guanosine, cytidine, thymidine, inosine and xanthosine as substrates. Also catalyzes the reverse reactions. In Pseudomonas putida (strain W619), this protein is Pyrimidine/purine nucleoside phosphorylase.